Reading from the N-terminus, the 1325-residue chain is Cyclic nucleotide-gated channel beta-1 (1325 aa).

Disordered stretches follow at residues 1–124 (MLGW…QVAV), 147–198 (PQPV…SLWL), 227–279 (AVLD…PGDP), 340–470 (WEDA…LDSC), 482–637 (LERT…SQNS), and 659–694 (KEKL…PAEA). Topologically, residues 1–732 (MLGWVQRVLP…SIDPLTNLMY (732 aa)) are cytoplasmic. Acidic residues predominate over residues 43-81 (PQQEPEPEPEPEPEPEPEPEPEPEPEPEPEPEPVPEEAP). Residues 105-121 (LQETQVADPAQPTSQAQ) are compositionally biased toward polar residues. Basic and acidic residues predominate over residues 370–379 (IPRELTKIQE). Acidic residues-rich tracts occupy residues 380–393 (ERED…EEKE), 418–463 (EEKE…EEEP), and 495–517 (LPEE…EEKK). The span at 518-527 (EEEVEKKEEG) shows a compositional bias: basic and acidic residues. A compositionally biased stretch (pro residues) spans 560-571 (TLPPPERPPPSP). Residues 633-643 (ASQNSAIINDR) are calmodulin-binding CaM1. Residues 733-754 (ILWLFFVVLAWNWNCWLIPVRW) traverse the membrane as a helical segment. The Extracellular segment spans residues 755–763 (AFPYQRADN). Residues 764–785 (IHFWLLMDYLCDFIYLLDITVF) form a helical membrane-spanning segment. The Cytoplasmic portion of the chain corresponds to 786-800 (QMRLQFVKGGDIITD). Residues 801-820 (KKEMRNNYLKSRRFKMDLLC) traverse the membrane as a helical segment. Residues 821–836 (LLPLDFLYLKLGINPL) lie on the Extracellular side of the membrane. The chain crosses the membrane as a helical span at residues 837–849 (LRLPRCLKYMAFF). Residues 850-861 (EFNNRLEAILSK) lie on the Cytoplasmic side of the membrane. A helical transmembrane segment spans residues 862–884 (AYVYRVIRTTAYLLYSLHLNSCL). The interval 862–961 (AYVYRVIRTT…IGQMRDVVGA (100 aa)) is ion conduction pathway. The Extracellular portion of the chain corresponds to 885 to 907 (YYWASAFQGIGSTHWVYDGVGNS). A run of 2 helical transmembrane segments spans residues 908–934 (YIRC…LFEI) and 935–960 (VFQL…DVVG). At 961-1325 (AATAGQTYYR…VLEEKKEGAE (365 aa)) the chain is on the cytoplasmic side. A C-linker region spans residues 964-1040 (AGQTYYRSCM…SIVSKVALFQ (77 aa)). A cNMP-binding domain region spans residues 1038-1142 (LFQGCDRQMI…LDKKDLNEIL (105 aa)). The interval 1044–1160 (RQMIFDMLKR…LLRKKARRML (117 aa)) is cyclic nucleotide-binding domain. Residues Gly1105, Glu1106, Ser1108, Arg1118, and Thr1119 each coordinate 3',5'-cyclic GMP. Arg1118 is a binding site for 3',5'-cyclic AMP. A calmodulin-binding CaM2 region spans residues 1224-1230 (QQQLLEQ). Low complexity predominate over residues 1226–1250 (QLLEQAKSSQEAGGEEGSGATDQPA). The disordered stretch occupies residues 1226–1325 (QLLEQAKSSQ…VLEEKKEGAE (100 aa)). Residues 1262-1279 (KPPGPPEPSAQSSPPPAS) show a composition bias toward pro residues.

The protein belongs to the cyclic nucleotide-gated cation channel (TC 1.A.1.5) family. CNGB1 subfamily. As to expression, rod outer segments. Olfactory sensory neurons.

The protein localises to the cell projection. Its subcellular location is the cilium membrane. It catalyses the reaction Ca(2+)(in) = Ca(2+)(out). The enzyme catalyses Na(+)(in) = Na(+)(out). It carries out the reaction K(+)(in) = K(+)(out). The catalysed reaction is NH4(+)(in) = NH4(+)(out). It catalyses the reaction Rb(+)(in) = Rb(+)(out). The enzyme catalyses Li(+)(in) = Li(+)(out). It carries out the reaction Cs(+)(in) = Cs(+)(out). In terms of biological role, pore-forming subunit of the rod cyclic nucleotide-gated channel. Mediates rod photoresponses at dim light converting transient changes in intracellular cGMP levels into electrical signals. In the dark, cGMP levels are high and keep the channel open enabling a steady inward current carried by Na(+) and Ca(2+) ions that leads to membrane depolarization and neurotransmitter release from synaptic terminals. Upon photon absorption cGMP levels decline leading to channel closure and membrane hyperpolarization that ultimately slows neurotransmitter release and signals the presence of light, the end point of the phototransduction cascade. Pore-forming subunit of the olfactory cyclic nucleotide-gated channel. Operates in the cilia of olfactory sensory neurons where chemical stimulation of the odorant is converted to an electrical signal. Mediates odorant-induced cAMP-dependent Ca(2+) influx triggering neuron depolarization. The rise of intracellular Ca(2+) levels potentiates the olfactory response by activating Ca(2+)-dependent Cl(-) channels, but it also serves as a negative feedback signal to desensitize the channel for rapid adaptation to odorants. Conducts cGMP- and cAMP-gated ion currents, with permeability for monovalent and divalent cations. The selectivity for Ca(2+) over Na(+) increases with cGMP concentrations, whereas the selectivity among monovalent ions is independent of the cGMP levels. This Mus musculus (Mouse) protein is Cyclic nucleotide-gated channel beta-1.